Here is a 212-residue protein sequence, read N- to C-terminus: ER lumen protein-retaining receptor 1 (212 aa).

The Lumenal portion of the chain corresponds to 1–4; the sequence is MNLF. The chain crosses the membrane as a helical span at residues 5–24; that stretch reads RFLGDLSHLLAIILLLLKIW. Residues 25-32 are Cytoplasmic-facing; that stretch reads KSRSCAGI. Residues 33-52 traverse the membrane as a helical segment; the sequence is SGKSQVLFAVVFTARYLDLF. Positions 47–48 are interaction with the K-D-E-L motif on target proteins; sequence RY. At 53–58 the chain is on the lumenal side; it reads TNYISL. Residues 59–79 form a helical membrane-spanning segment; that stretch reads YNTCMKVVYIACSFTTVWMIY. The Cytoplasmic portion of the chain corresponds to 80–92; that stretch reads SKFKATYDGNHDT. Residues 93–110 traverse the membrane as a helical segment; sequence FRVEFLVVPTAILAFLVN. Residues 111–116 are Lumenal-facing; that stretch reads HDFTPL. Residues 117 to 135 traverse the membrane as a helical segment; it reads EILWTFSIYLESVAILPQL. At 136–149 the chain is on the cytoplasmic side; that stretch reads FMVSKTGEAETITS. A helical membrane pass occupies residues 150-168; that stretch reads HYLFALGVYRTLYLFNWIW. An interaction with the K-D-E-L motif on target proteins region spans residues 159–169; the sequence is RTLYLFNWIWR. The Lumenal portion of the chain corresponds to 169 to 178; it reads RYHFEGFFDL. The chain crosses the membrane as a helical span at residues 179 to 199; the sequence is IAIVAGLVQTVLYCDFFYLYI. Topologically, residues 200–212 are cytoplasmic; it reads TKVLKGKKLSLPA. An important for recycling of cargo proteins with the sequence motif K-D-E-L from the Golgi to the endoplasmic reticulum region spans residues 204-207; it reads KGKK. Ser209 carries the phosphoserine; by PKA modification.

Belongs to the ERD2 family. Upon ligand binding the receptor oligomerizes and interacts with components of the transport machinery such as ARFGAP1 and ARF1. In terms of processing, phosphorylation by PKA at Ser-209 is required for endoplasmic reticulum retention function.

It is found in the golgi apparatus membrane. It localises to the cytoplasmic vesicle. The protein resides in the COPI-coated vesicle membrane. Its subcellular location is the endoplasmic reticulum membrane. The protein localises to the endoplasmic reticulum-Golgi intermediate compartment membrane. In terms of biological role, receptor for the C-terminal sequence motif K-D-E-L that is present on endoplasmic reticulum resident proteins and that mediates their recycling from the Golgi back to the endoplasmic reticulum. The polypeptide is ER lumen protein-retaining receptor 1 (Kdelr1) (Mus musculus (Mouse)).